The sequence spans 211 residues: Probable metallo-hydrolase YqgX (211 aa).

Zn(2+) contacts are provided by His-54, His-56, Asp-58, His-59, His-130, Asp-149, and His-190.

Belongs to the metallo-beta-lactamase superfamily. Glyoxalase II family. Requires Zn(2+) as cofactor.

This chain is Probable metallo-hydrolase YqgX (yqgX), found in Bacillus subtilis (strain 168).